The following is a 370-amino-acid chain: A-type ATP synthase subunit C (370 aa).

This sequence belongs to the V-ATPase V0D/AC39 subunit family. Has multiple subunits with at least A(3), B(3), C, D, E, F, H, I and proteolipid K(x).

The protein resides in the cell membrane. In terms of biological role, component of the A-type ATP synthase that produces ATP from ADP in the presence of a proton gradient across the membrane. The protein is A-type ATP synthase subunit C of Pyrococcus horikoshii (strain ATCC 700860 / DSM 12428 / JCM 9974 / NBRC 100139 / OT-3).